The sequence spans 654 residues: DNA-directed RNA polymerase III subunit RPC3 (654 aa).

Threonine 27 is subject to Phosphothreonine. Disordered stretches follow at residues 381-401 and 422-448; these read LSRK…ASLP and KSLQ…EDPH. A phosphoserine mark is found at serine 392 and serine 394. Residues 429–444 are compositionally biased toward acidic residues; sequence DTQEEDEEEEDLDADT. Residues 581–602 form a leucine-zipper region; sequence LEWNMANLLFKKEKLKQENSTL.

It belongs to the eukaryotic RPC3/POLR3C RNA polymerase subunit family. In terms of assembly, component of the RNA polymerase III (Pol III) complex consisting of 17 subunits.

The protein resides in the cytoplasm. It localises to the nucleus. In terms of biological role, DNA-dependent RNA polymerase catalyzes the transcription of DNA into RNA using the four ribonucleoside triphosphates as substrates. Specific core component of RNA polymerase III which synthesizes small RNAs, such as 5S rRNA and tRNAs. In Saccharomyces cerevisiae (strain ATCC 204508 / S288c) (Baker's yeast), this protein is DNA-directed RNA polymerase III subunit RPC3 (RPC82).